A 307-amino-acid chain; its full sequence is Probable GTP 3',8-cyclase (307 aa).

The Radical SAM core domain occupies 4-222; sequence ALGREVRSVR…RTFHSREVYR (219 aa). Arginine 13 is a binding site for GTP. Cysteine 20 and cysteine 24 together coordinate [4Fe-4S] cluster. Position 26 (tyrosine 26) interacts with S-adenosyl-L-methionine. Cysteine 27 provides a ligand contact to [4Fe-4S] cluster. Lysine 60 is a binding site for GTP. Residues glycine 64 and serine 112 each coordinate S-adenosyl-L-methionine. Lysine 150 contacts GTP. The [4Fe-4S] cluster site is built by cysteine 240 and cysteine 243. 245–247 provides a ligand contact to GTP; that stretch reads RIR. Cysteine 257 serves as a coordination point for [4Fe-4S] cluster.

The protein belongs to the radical SAM superfamily. MoaA family. The cofactor is [4Fe-4S] cluster.

It carries out the reaction GTP + AH2 + S-adenosyl-L-methionine = (8S)-3',8-cyclo-7,8-dihydroguanosine 5'-triphosphate + 5'-deoxyadenosine + L-methionine + A + H(+). It functions in the pathway cofactor biosynthesis; molybdopterin biosynthesis. Catalyzes the cyclization of GTP to (8S)-3',8-cyclo-7,8-dihydroguanosine 5'-triphosphate. The sequence is that of Probable GTP 3',8-cyclase from Methanopyrus kandleri (strain AV19 / DSM 6324 / JCM 9639 / NBRC 100938).